The following is a 58-amino-acid chain: MTQVTVGENEGIESALRRFKRQVSKSGIFADLKRLRHHETPIEKYKRKLQQRRKARRR.

Belongs to the bacterial ribosomal protein bS21 family.

The sequence is that of Small ribosomal subunit protein bS21 from Prochlorococcus marinus (strain MIT 9515).